Reading from the N-terminus, the 152-residue chain is MLEVSILDKRWHSITKDPQSFVLNIINASLKELKIDHYKPNISIALADDNLLHQLNLKFREIDKPTNVLSFPCEQLSSECDLGDIAIAVDTIERESHEYCISILTHTAHMLVHGLLHLLGYDHQKEDEEIIMKSLESKILALLEFEKEKYGR.

3 residues coordinate Zn(2+): His-113, His-117, and His-123.

Belongs to the endoribonuclease YbeY family. Requires Zn(2+) as cofactor.

It is found in the cytoplasm. Single strand-specific metallo-endoribonuclease involved in late-stage 70S ribosome quality control and in maturation of the 3' terminus of the 16S rRNA. The sequence is that of Endoribonuclease YbeY from Wolbachia pipientis subsp. Culex pipiens (strain wPip).